A 267-amino-acid polypeptide reads, in one-letter code: Small ribosomal subunit protein uS2 (267 aa).

Positions 224-267 (GRQGEDQVDEKTFEGQKSEAAEGDKKTADNSMEDIVNAVEGDNK) are disordered. Residues 225–251 (RQGEDQVDEKTFEGQKSEAAEGDKKTA) are compositionally biased toward basic and acidic residues.

It belongs to the universal ribosomal protein uS2 family.

This Levilactobacillus brevis (strain ATCC 367 / BCRC 12310 / CIP 105137 / JCM 1170 / LMG 11437 / NCIMB 947 / NCTC 947) (Lactobacillus brevis) protein is Small ribosomal subunit protein uS2.